The primary structure comprises 312 residues: Olfactory receptor 2H2 (312 aa).

The Extracellular portion of the chain corresponds to 1-23 (MVNQSSTPGFLLLGFSEHPGLER). The N-linked (GlcNAc...) asparagine glycan is linked to asparagine 3. Residues 24 to 47 (TLFVVVLTSYLLTLVGNTLIILLS) form a helical membrane-spanning segment. Over 48–55 (ALDPKLHS) the chain is Cytoplasmic. A helical transmembrane segment spans residues 56–77 (PMYFFLSNLSFLDLCFTTSCVP). The Extracellular segment spans residues 78-98 (QMLVNLWGPKKTISFLDCSVQ). The cysteines at positions 95 and 187 are disulfide-linked. Residues 99–118 (IFIFLSLGTTECILLTVMAF) traverse the membrane as a helical segment. At 119-137 (DRYVAVCQPLHYATIIHPR) the chain is on the cytoplasmic side. The chain crosses the membrane as a helical span at residues 138 to 156 (LCWQLASVAWVIGLVESVV). At 157 to 193 (QTPSTLHLPFCPDRQVDDFVCEVPALIRLSCEDTSYN) the chain is on the extracellular side. Residues 194–217 (EIQVAVASVFILVVPLSLILVSYG) form a helical membrane-spanning segment. Over 218-234 (AITWAVLRINSAKGRRK) the chain is Cytoplasmic. The helical transmembrane segment at 235-257 (AFGTCSSHLTVVTLFYSSVIAVY) threads the bilayer. At 258–270 (LQPKNPYAQERGK) the chain is on the extracellular side. A helical transmembrane segment spans residues 271 to 290 (FFGLFYAVGTPSLNPLIYTL). Residues 291–312 (RNKEVTRAFRRLLGKEMGLTQS) lie on the Cytoplasmic side of the membrane.

This sequence belongs to the G-protein coupled receptor 1 family.

It is found in the cell membrane. In terms of biological role, odorant receptor. This Homo sapiens (Human) protein is Olfactory receptor 2H2 (OR2H2).